We begin with the raw amino-acid sequence, 185 residues long: Ribosome-recycling factor (185 aa).

It belongs to the RRF family.

It localises to the cytoplasm. Its function is as follows. Responsible for the release of ribosomes from messenger RNA at the termination of protein biosynthesis. May increase the efficiency of translation by recycling ribosomes from one round of translation to another. In Streptococcus pneumoniae (strain 70585), this protein is Ribosome-recycling factor.